Here is a 64-residue protein sequence, read N- to C-terminus: Small ribosomal subunit protein eS17 (64 aa).

This sequence belongs to the eukaryotic ribosomal protein eS17 family.

The chain is Small ribosomal subunit protein eS17 from Methanosarcina mazei (strain ATCC BAA-159 / DSM 3647 / Goe1 / Go1 / JCM 11833 / OCM 88) (Methanosarcina frisia).